A 76-amino-acid polypeptide reads, in one-letter code: Omega-conotoxin-like TxO5 (76 aa).

An N-terminal signal peptide occupies residues 1–22 (MKLTCMMIVAVLFLTAWTFVTA). A propeptide spanning residues 23–48 (ITSNGLENLFPKAHHEMKNPEASKLN) is cleaved from the precursor. Intrachain disulfides connect C51-C66, C58-C70, and C65-C75.

This sequence belongs to the conotoxin O1 superfamily. In terms of tissue distribution, expressed by the venom duct.

The protein resides in the secreted. Omega-conotoxins act at presynaptic membranes, they bind and block voltage-gated calcium channels (Cav). The sequence is that of Omega-conotoxin-like TxO5 from Conus textile (Cloth-of-gold cone).